The sequence spans 118 residues: GRB2-related adapter protein-like (118 aa).

One can recognise an SH3 domain in the interval 1–58; it reads MESVALYSFQATESDELAFNKGDTLKILNMEDDQNWYKAELRGVEGFIPKNYIRVKPH. The SH2 domain maps to 60–118; it reads WYSGRISRQLAEEILMKRNHLGAFLIRESESSPGEFSVSVNNRAQRGPCLGPKSHSRLG. The interval 89 to 118 is disordered; the sequence is ESSPGEFSVSVNNRAQRGPCLGPKSHSRLG. Residues 90 to 103 are compositionally biased toward polar residues; that stretch reads SSPGEFSVSVNNRA.

This sequence belongs to the GRB2/sem-5/DRK family.

In Homo sapiens (Human), this protein is GRB2-related adapter protein-like (GRAPL).